We begin with the raw amino-acid sequence, 119 residues long: Large ribosomal subunit protein bL20 (119 aa).

Belongs to the bacterial ribosomal protein bL20 family.

In terms of biological role, binds directly to 23S ribosomal RNA and is necessary for the in vitro assembly process of the 50S ribosomal subunit. It is not involved in the protein synthesizing functions of that subunit. This is Large ribosomal subunit protein bL20 from Rhodopseudomonas palustris (strain BisB18).